The chain runs to 345 residues: MRSSKVIHVVGCHAEGEVGDVIVGGVAPPPGETVWAQSRFVASDNTLRNFVLQEPRGGVFRHVNLLVPPKNKEAVAAWIIMEPEDTPPMSGSNSICVSTVLLDTGIVPMVEPETHMVLEAPGGLIEATAYCKNGKAERIRVKNHPSFADKLDAKLELEGYGTLTVDTAYGGDSFCIVDAHALGFSIKPDEAKDFADLGMKIVKAANQQLGFQHPTNKDWSHISFCQFAAPLTDDNGTPSGANAVAIRPGKIDRSPCGTGCSARMAVLHAKGILKVGDAFVGRSIIGSRFDCRVEAETSIGGRPAIVPSIMGRAFITHTAQLMVDPDDPWQTGYRLSDTWPVWKQD.

Ser90 acts as the Proton acceptor in catalysis. Substrate is bound by residues 91 to 92 (GS), Asp252, and 257 to 258 (GT).

This sequence belongs to the proline racemase family.

The enzyme catalyses trans-3-hydroxy-L-proline = 1-pyrroline-2-carboxylate + H2O. In terms of biological role, catalyzes the dehydration of trans-3-hydroxy-L-proline (t3LHyp) to Delta(1)-pyrroline-2-carboxylate (Pyr2C). May be involved in a degradation pathway that converts t3LHyp to L-proline, which would allow S.novella to grow on t3LHyp as a sole carbon source. The chain is Trans-3-hydroxy-L-proline dehydratase from Ancylobacter novellus (strain ATCC 8093 / DSM 506 / JCM 20403 / CCM 1077 / IAM 12100 / NBRC 12443 / NCIMB 10456) (Starkeya novella).